We begin with the raw amino-acid sequence, 271 residues long: MADDNQNEVKDEVVADIAPFDPTKKKKKKEVVIQDTTDDSVGKLAEKAEACTASEGQESTFAGLKKKKKKPIETSILNEESGDAVEDLNERTGEDEEGEGIVLETPSYPWEGSDRDYTYEELLDRVFTILRENNPDLAGDRRRTVMRPPQVLREGTKKAVFVNFMDLCKTMHRQPDHVMAFLLAELGTSGSLDGQQRLVVKGRFAPKNFEGILRRYVNEYVICLGCQSPDTILSKENRLFFLRCEKCGSGRSVAPNKAGFMARVGRRNAGT.

A C4-type zinc finger spans residues 223 to 247; that stretch reads CLGCQSPDTILSKENRLFFLRCEKC.

The protein belongs to the eIF-2-beta/eIF-5 family. As to quaternary structure, eukaryotic translation initiation factor 2 eIF2 is a heterotrimeric complex composed of an alpha, a beta and a gamma subunit.

Its subcellular location is the cytoplasm. The protein resides in the cytosol. In terms of biological role, component of the eIF2 complex that functions in the early steps of protein synthesis by forming a ternary complex with GTP and initiator tRNA. This complex binds to a 40S ribosomal subunit, followed by mRNA binding to form a 43S pre-initiation complex (43S PIC). Junction of the 60S ribosomal subunit to form the 80S initiation complex is preceded by hydrolysis of the GTP bound to eIF2 and release of an eIF2-GDP binary complex. In order for eIF2 to recycle and catalyze another round of initiation, the GDP bound to eIF2 must exchange with GTP by way of a reaction catalyzed by eIF2B. This chain is Eukaryotic translation initiation factor 2 subunit beta, found in Malus domestica (Apple).